The primary structure comprises 160 residues: Ubiquitin-conjugating enzyme E2 16 (160 aa).

The region spanning 3 to 153 (SSIKRLHKEY…VRCTTYLYAK (151 aa)) is the UBC core domain. Catalysis depends on Cys90, which acts as the Glycyl thioester intermediate.

The protein belongs to the ubiquitin-conjugating enzyme family.

It carries out the reaction S-ubiquitinyl-[E1 ubiquitin-activating enzyme]-L-cysteine + [E2 ubiquitin-conjugating enzyme]-L-cysteine = [E1 ubiquitin-activating enzyme]-L-cysteine + S-ubiquitinyl-[E2 ubiquitin-conjugating enzyme]-L-cysteine.. The protein operates within protein modification; protein ubiquitination. Catalyzes the covalent attachment of ubiquitin to other proteins. The sequence is that of Ubiquitin-conjugating enzyme E2 16 (ubc16) from Schizosaccharomyces pombe (strain 972 / ATCC 24843) (Fission yeast).